The sequence spans 391 residues: Heme A synthase (391 aa).

Transmembrane regions (helical) follow at residues Ile37–Leu57, Arg121–Ala141, Leu152–Ser172, Leu186–Leu206, Thr229–Ile249, Phe298–Gly318, Leu332–Ala352, and Trp354–Ala374. His300 serves as a coordination point for heme. His360 is a binding site for heme.

It belongs to the COX15/CtaA family. Type 2 subfamily. As to quaternary structure, interacts with CtaB. Heme b is required as a cofactor.

It localises to the cell membrane. The enzyme catalyses Fe(II)-heme o + 2 A + H2O = Fe(II)-heme a + 2 AH2. Its pathway is porphyrin-containing compound metabolism; heme A biosynthesis; heme A from heme O: step 1/1. In terms of biological role, catalyzes the conversion of heme O to heme A by two successive hydroxylations of the methyl group at C8. The first hydroxylation forms heme I, the second hydroxylation results in an unstable dihydroxymethyl group, which spontaneously dehydrates, resulting in the formyl group of heme A. The chain is Heme A synthase from Cereibacter sphaeroides (strain ATCC 17029 / ATH 2.4.9) (Rhodobacter sphaeroides).